Consider the following 478-residue polypeptide: Geranial dehydrogenase (478 aa).

230-235 provides a ligand contact to NAD(+); the sequence is GSTSAG. The active-site Proton acceptor is E252. C286 serves as the catalytic Nucleophile.

The protein belongs to the aldehyde dehydrogenase family.

The catalysed reaction is (2E)-geranial + NAD(+) + H2O = geranate + NADH + 2 H(+). It catalyses the reaction perillyl aldehyde + NAD(+) + H2O = perillate + NADH + 2 H(+). Its pathway is terpene metabolism; monoterpene degradation. Its function is as follows. Involved in the degradation of the monoterpenes beta-myrcene and limonene. During anaerobic degradation of beta-myrcene, catalyzes the NAD(+)-dependent oxidation of geranial to geranic acid. Seems to be specific for the trans-isomer geranial, since it does not act on the cis-isomer neral. During degradation of limonene, catalyzes the NAD(+)-dependent conversion of perillyl aldehyde to perrilic acid. The protein is Geranial dehydrogenase of Castellaniella defragrans (strain DSM 12143 / CCUG 39792 / 65Phen) (Alcaligenes defragrans).